The primary structure comprises 676 residues: Protein TAPT1 homolog (676 aa).

The disordered stretch occupies residues 1-44 (MNATLNSAGGKRQLRFRGDVTGSRVEELHHQQQEEQKQKAPLAQ). Residues 24–38 (RVEELHHQQQEEQKQ) are compositionally biased toward basic and acidic residues. 6 helical membrane passes run 128 to 148 (SFLY…WALV), 170 to 190 (EICD…MLLV), 249 to 269 (VLTH…LIMF), 346 to 366 (FCVM…IDWV), 414 to 434 (GFIP…AVSF), and 437 to 457 (LAAW…RICL). The interval 625–676 (SGDGVTSAKAKKATQRLPKRTHKRSESEPGMPSMVEKGGAAGIAGGNQTTQL) is disordered. Residues 633-647 (KAKKATQRLPKRTHK) are compositionally biased toward basic residues.

Belongs to the TAPT1 family.

The protein localises to the membrane. The protein is Protein TAPT1 homolog of Drosophila melanogaster (Fruit fly).